A 358-amino-acid chain; its full sequence is Short chain dehydrogenase sor7 (358 aa).

The interval 1–22 is disordered; it reads MSSPAIGQPPIPPTPTDANISG. Residues leucine 34, aspartate 88, asparagine 115, tyrosine 206, lysine 210, valine 238, and threonine 240 each coordinate NADP(+). Tyrosine 206 (proton donor) is an active-site residue. Lysine 210 (lowers pKa of active site Tyr) is an active-site residue.

It belongs to the short-chain dehydrogenases/reductases (SDR) family.

It functions in the pathway secondary metabolite biosynthesis. Functionally, short chain dehydrogenase; part of the SOR gene cluster that mediates the biosynthesis of sorbicillinoids, a diverse group of yellow secondary metabolites that restrict growth of competing pathogenic fungi but not of bacteria. Sorbicillinoids biosynthesis requires the action of two PKSs. The SOR cluster is required for the production of trichodimerol and dihydrotrichotetronin, with sor2 being sufficient for production of trichodimerol, but not dihydrotrichotetronin in the light. Sor1 iteratively combines three acetyl units and the growing chain is modified by the ketoacyl reductase subunit, and optional by the enoyl reductase subunit in the second cycle. The polyketide is then handed over to the PKS sor2, which adds three more acetyl units, and two methyl groups. Sor2 releases an aldehyde, which undergoes spontaneous cyclization resulting in the formation of sorbicillin or 2',3'-dihydrosorbicillin. The monooxygenase sor5 oxidizes sorbicillin and 2',3'-dihydrosorbicillin to 2',3'-dihydrosorbicillinol and sorbicillinol, respectively. The oxidoreductase sor8 further converts sorbicillinol into oxosorbicillinol. Sorbicillinol is the building block for the other sorbicillinoids such as disorbicillinol, bisvertinolon, dihydrobisvertinolone, and dihydrotrichotetronine. The chain is Short chain dehydrogenase sor7 from Hypocrea jecorina (strain QM6a) (Trichoderma reesei).